Reading from the N-terminus, the 319-residue chain is Acetyl-coenzyme A carboxylase carboxyl transferase subunit alpha (319 aa).

A CoA carboxyltransferase C-terminal domain is found at 39 to 293; it reads RLQKKSNDLT…KAVLEKQLHE (255 aa).

The protein belongs to the AccA family. Acetyl-CoA carboxylase is a heterohexamer composed of biotin carboxyl carrier protein (AccB), biotin carboxylase (AccC) and two subunits each of ACCase subunit alpha (AccA) and ACCase subunit beta (AccD).

It localises to the cytoplasm. It carries out the reaction N(6)-carboxybiotinyl-L-lysyl-[protein] + acetyl-CoA = N(6)-biotinyl-L-lysyl-[protein] + malonyl-CoA. The protein operates within lipid metabolism; malonyl-CoA biosynthesis; malonyl-CoA from acetyl-CoA: step 1/1. Functionally, component of the acetyl coenzyme A carboxylase (ACC) complex. First, biotin carboxylase catalyzes the carboxylation of biotin on its carrier protein (BCCP) and then the CO(2) group is transferred by the carboxyltransferase to acetyl-CoA to form malonyl-CoA. The protein is Acetyl-coenzyme A carboxylase carboxyl transferase subunit alpha of Neisseria meningitidis serogroup C (strain 053442).